The sequence spans 264 residues: S-adenosylmethionine decarboxylase proenzyme (264 aa).

The active-site Schiff-base intermediate with substrate; via pyruvic acid is the S113. The residue at position 113 (S113) is a Pyruvic acid (Ser); by autocatalysis. The Proton acceptor; for processing activity role is filled by H118. C141 acts as the Proton donor; for catalytic activity in catalysis.

This sequence belongs to the prokaryotic AdoMetDC family. Type 2 subfamily. As to quaternary structure, heterooctamer of four alpha and four beta chains arranged as a tetramer of alpha/beta heterodimers. It depends on pyruvate as a cofactor. Post-translationally, is synthesized initially as an inactive proenzyme. Formation of the active enzyme involves a self-maturation process in which the active site pyruvoyl group is generated from an internal serine residue via an autocatalytic post-translational modification. Two non-identical subunits are generated from the proenzyme in this reaction, and the pyruvate is formed at the N-terminus of the alpha chain, which is derived from the carboxyl end of the proenzyme. The post-translation cleavage follows an unusual pathway, termed non-hydrolytic serinolysis, in which the side chain hydroxyl group of the serine supplies its oxygen atom to form the C-terminus of the beta chain, while the remainder of the serine residue undergoes an oxidative deamination to produce ammonia and the pyruvoyl group blocking the N-terminus of the alpha chain.

The enzyme catalyses S-adenosyl-L-methionine + H(+) = S-adenosyl 3-(methylsulfanyl)propylamine + CO2. Its pathway is amine and polyamine biosynthesis; S-adenosylmethioninamine biosynthesis; S-adenosylmethioninamine from S-adenosyl-L-methionine: step 1/1. Catalyzes the decarboxylation of S-adenosylmethionine to S-adenosylmethioninamine (dcAdoMet), the propylamine donor required for the synthesis of the polyamines spermine and spermidine from the diamine putrescine. This is S-adenosylmethionine decarboxylase proenzyme from Pseudomonas aeruginosa (strain ATCC 15692 / DSM 22644 / CIP 104116 / JCM 14847 / LMG 12228 / 1C / PRS 101 / PAO1).